The chain runs to 110 residues: Large ribosomal subunit protein P2 (110 aa).

Ser59 carries the O-(pantetheine 4'-phosphoryl)serine; in acyl carrier protein form modification. The segment at 62–110 (LASVPSGGAAPAAAAGGAAAGGAAEEKAEDKPAEKDEESDDDMGFGLFD) is disordered. Over residues 63–84 (ASVPSGGAAPAAAAGGAAAGGA) the composition is skewed to low complexity. The segment covering 85 to 95 (AEEKAEDKPAE) has biased composition (basic and acidic residues). At Ser100 the chain carries Phosphoserine; in ribosomal stalk form.

This sequence belongs to the eukaryotic ribosomal protein P1/P2 family. The phosphorylated form is part of the ribosomal stalk involved in the interaction of the elongation factors with the ribosome during protein synthesis. The phosphopantetheinylated form is part of the 10S triacylglycerol biosynthetic complex involved in de novo fatty acid biosynthesis. Post-translationally, 4'-phosphopantetheine is transferred from CoA to a specific serine by acpS. This modification is essential for activity because fatty acids are bound in thioester linkage to the sulfhydryl of the prosthetic group.

The protein localises to the cytoplasm. Functionally, probable bifunctional protein. The phosphorylated protein plays an important role in the elongation step of protein synthesis. The phosphopantetheinylated protein acts as an acyl carrier protein. This is Large ribosomal subunit protein P2 from Rhodotorula glutinis (Yeast).